A 502-amino-acid polypeptide reads, in one-letter code: MKVPAYWKPREPKNALTCDPPVPYDLQSSYQWQSILEHDTCYAAEVFDKMMIELVYHPERTSSVIMRTDIILDSQEDDSILNKQKSVFENLDERYQISRWIDRRIIPRNTNLDATMDQTVVVLHEKLENDRILMYLPHLDKSLEQPYNHLPYYHPAVAGIAFHYKGSSVEVLYLVEKDFQRELSSRLLRTAHMLLLVLHKHCKGAVEGYQKRMLHDTVVERNKFQDTYVILKDKYAKQLVDNWVEKTDPGKHVFEDLAIAAFLIELWKQTYSSNKEFSFVDVGCGNGLLVYLLLMEGYNGYGFDARKRKSWETYPLWVQVKLYEKVLVPYFLHDFETKIPFPQLPAGFTMSAANIHDGRFSENSFLIGNHADELTPYLPILARLNQKCYFMSIPCCVHDLTGAKISWALPKPRNPKHGGRYAMYIEWLMQLSEEVGWNIEVEPLRIPSTRNYALIGRKLLSNDLLHSSLSTDALYDIVEKNHGSQGFFVHAMQVAAANSRSH.

It belongs to the TRM44 family.

It localises to the cytoplasm. It carries out the reaction uridine(44) in tRNA(Ser) + S-adenosyl-L-methionine = 2'-O-methyluridine(44) in tRNA(Ser) + S-adenosyl-L-homocysteine + H(+). Functionally, probable adenosyl-L-methionine (AdoMet)-dependent tRNA (uracil-O(2)-)-methyltransferase. This chain is tRNA (uracil-O(2)-)-methyltransferase (trm44), found in Schizosaccharomyces pombe (strain 972 / ATCC 24843) (Fission yeast).